Here is a 415-residue protein sequence, read N- to C-terminus: Tyrosine--tRNA ligase (415 aa).

An L-tyrosine-binding site is contributed by tyrosine 40. The 'HIGH' region signature appears at 45–54 (ATAKSLHVGS). L-tyrosine contacts are provided by tyrosine 178 and glutamine 182. The 'KMSKS' region motif lies at 238 to 242 (KMGKS). Residue lysine 241 participates in ATP binding. The region spanning 350 to 414 (ASIVQLIVKT…GKKRHALVQL (65 aa)) is the S4 RNA-binding domain.

The protein belongs to the class-I aminoacyl-tRNA synthetase family. TyrS type 1 subfamily. Homodimer.

It localises to the cytoplasm. It catalyses the reaction tRNA(Tyr) + L-tyrosine + ATP = L-tyrosyl-tRNA(Tyr) + AMP + diphosphate + H(+). Functionally, catalyzes the attachment of tyrosine to tRNA(Tyr) in a two-step reaction: tyrosine is first activated by ATP to form Tyr-AMP and then transferred to the acceptor end of tRNA(Tyr). This chain is Tyrosine--tRNA ligase, found in Ruegeria pomeroyi (strain ATCC 700808 / DSM 15171 / DSS-3) (Silicibacter pomeroyi).